Consider the following 142-residue polypeptide: Transmembrane protein 170A (142 aa).

Residues 1 to 48 lie on the Lumenal side of the membrane; it reads MEGGGGGLGGEPGLLQQILSLRLVPRVGNVTDCQRATLCSFPEMWYGV. N-linked (GlcNAc...) asparagine glycosylation is present at N29. Residues 49-69 traverse the membrane as a helical segment; it reads FLWALVSSLFFHIPAGLLALF. At 70–78 the chain is on the cytoplasmic side; it reads TLRHHKYGR. A helical membrane pass occupies residues 79–99; it reads FMSVGIFLMGVLGPISAGILT. The Lumenal segment spans residues 100-114; sequence SAAIAGVYKAAGKEM. A helical membrane pass occupies residues 115–135; the sequence is IPFEALVLGVGQTFCVLIVSF. At 136–142 the chain is on the cytoplasmic side; that stretch reads LRILATL.

The protein belongs to the TMEM170 family.

The protein localises to the endoplasmic reticulum membrane. Its subcellular location is the nucleus envelope. In terms of biological role, may regulate membrane morphogenesis in the endoplasmic reticulum (ER) by promoting ER sheet formation at the expense of ER tubules. The sequence is that of Transmembrane protein 170A (tmem170a) from Xenopus laevis (African clawed frog).